Reading from the N-terminus, the 216-residue chain is GTP cyclohydrolase 1 (216 aa).

Cysteine 108, histidine 111, and cysteine 179 together coordinate Zn(2+).

The protein belongs to the GTP cyclohydrolase I family. As to quaternary structure, toroid-shaped homodecamer, composed of two pentamers of five dimers.

The catalysed reaction is GTP + H2O = 7,8-dihydroneopterin 3'-triphosphate + formate + H(+). It functions in the pathway cofactor biosynthesis; 7,8-dihydroneopterin triphosphate biosynthesis; 7,8-dihydroneopterin triphosphate from GTP: step 1/1. In Shewanella sp. (strain ANA-3), this protein is GTP cyclohydrolase 1.